The following is a 149-amino-acid chain: Transcriptional repressor NrdR (149 aa).

A zinc finger spans residues 3 to 34; it reads CPFCSATDTKVIDSRLVADGHQVRRRRECAEC. The ATP-cone domain maps to 49–139; the sequence is PRVVKQDGSR…VYRAFEDVSE (91 aa).

Belongs to the NrdR family. Requires Zn(2+) as cofactor.

Negatively regulates transcription of bacterial ribonucleotide reductase nrd genes and operons by binding to NrdR-boxes. This Shewanella sediminis (strain HAW-EB3) protein is Transcriptional repressor NrdR.